Here is a 181-residue protein sequence, read N- to C-terminus: TATA-box-binding protein (181 aa).

A run of 2 repeats spans residues 7-83 and 98-173.

This sequence belongs to the TBP family.

In terms of biological role, general factor that plays a role in the activation of archaeal genes transcribed by RNA polymerase. Binds specifically to the TATA box promoter element which lies close to the position of transcription initiation. This chain is TATA-box-binding protein, found in Methanococcus aeolicus (strain ATCC BAA-1280 / DSM 17508 / OCM 812 / Nankai-3).